Here is a 123-residue protein sequence, read N- to C-terminus: NHL-repeat-containing protein 4 (123 aa).

NHL repeat units follow at residues 35–78 and 79–119; these read QPLG…FPRA and GPPI…YQGL.

This Homo sapiens (Human) protein is NHL-repeat-containing protein 4 (NHLRC4).